Consider the following 260-residue polypeptide: Glutathione S-transferase domain-containing protein DDB_G0280881 (260 aa).

Positions lysine 7 to leucine 96 constitute a GST N-terminal domain. One can recognise a GST C-terminal domain in the interval asparagine 102–phenylalanine 228.

This sequence belongs to the GST superfamily.

The sequence is that of Glutathione S-transferase domain-containing protein DDB_G0280881 from Dictyostelium discoideum (Social amoeba).